Here is a 37-residue protein sequence, read N- to C-terminus: Large ribosomal subunit protein bL36 (37 aa).

It belongs to the bacterial ribosomal protein bL36 family.

In Leptospira interrogans serogroup Icterohaemorrhagiae serovar Lai (strain 56601), this protein is Large ribosomal subunit protein bL36.